The chain runs to 124 residues: Urease subunit beta (124 aa).

The protein belongs to the urease beta subunit family. In terms of assembly, heterotrimer of UreA (gamma), UreB (beta) and UreC (alpha) subunits. Three heterotrimers associate to form the active enzyme.

The protein resides in the cytoplasm. The catalysed reaction is urea + 2 H2O + H(+) = hydrogencarbonate + 2 NH4(+). It participates in nitrogen metabolism; urea degradation; CO(2) and NH(3) from urea (urease route): step 1/1. The polypeptide is Urease subunit beta (Ureaplasma parvum serovar 3 (strain ATCC 27815 / 27 / NCTC 11736)).